Consider the following 175-residue polypeptide: Capsid protein (175 aa).

The disordered stretch occupies residues 1–35; that stretch reads MFRQEMARYPKKSIKKRRVGRRKYGSKAATSHDYS. A compositionally biased stretch (basic residues) spans 9 to 25; sequence YPKKSIKKRRVGRRKYG.

The protein belongs to the nanoviridae capsid protein family.

Its subcellular location is the virion. The sequence is that of Capsid protein (DNA-S) from Musa (BBTV).